A 698-amino-acid chain; its full sequence is Ubiquitin-like modifier-activating enzyme ATG7 (698 aa).

An FAP motif motif is present at residues 11 to 13; sequence FAP. Residue Lys41 forms a Glycyl lysine isopeptide (Lys-Gly) (interchain with G-Cter in ubiquitin) linkage. Cys567 functions as the Glycyl thioester intermediate in the catalytic mechanism. Ser693 carries the post-translational modification Phosphoserine.

It belongs to the ATG7 family. Homodimer. Interacts with ATG3; this interaction is essential for the transfer of ATG8-like proteins's thioester from ATG7 to ATG3 and plays a role in the conjugation of ATG12 to ATG5. Interacts with ATG12. Forms intermediate conjugates with GABARAPL1. Forms intermediate conjugates with ATG8-like proteins such as GABARAP, GABARAPL2 or MAP1LC3A. Interacts with EP300 acetyltransferase. Interacts with FOXO1. Acetylated by EP300. Post-translationally, polyubiquitinated on Lys-41 via 'Lys-63'-linked ubiquitin by TRIM32; this modification positiely regulates ATG8 and ATG12 activating enzyme activity leading to initiation of autophagy under metabolic stress. Widely expressed.

Its subcellular location is the cytoplasm. The protein localises to the preautophagosomal structure. In terms of biological role, E1-like activating enzyme involved in the 2 ubiquitin-like systems required for cytoplasm to vacuole transport (Cvt) and autophagy. Activates ATG12 for its conjugation with ATG5 as well as the ATG8 family proteins for their conjugation with phosphatidylethanolamine. Both systems are needed for the ATG8 association to Cvt vesicles and autophagosomes membranes. Required for autophagic death induced by caspase-8 inhibition. Facilitates LC3-I lipidation with phosphatidylethanolamine to form LC3-II which is found on autophagosomal membranes. Required for mitophagy which contributes to regulate mitochondrial quantity and quality by eliminating the mitochondria to a basal level to fulfill cellular energy requirements and preventing excess ROS production. Modulates p53/TP53 activity to regulate cell cycle and survival during metabolic stress. Also plays a key role in the maintenance of axonal homeostasis, the prevention of axonal degeneration, the maintenance of hematopoietic stem cells, the formation of Paneth cell granules, as well as in adipose differentiation. Plays a role in regulating the liver clock and glucose metabolism by mediating the autophagic degradation of CRY1 (clock repressor) in a time-dependent manner. This is Ubiquitin-like modifier-activating enzyme ATG7 from Rattus norvegicus (Rat).